The sequence spans 192 residues: Acireductone dioxygenase 2 (192 aa).

Fe(2+) is bound by residues H99, H101, E105, and H144. Positions 99, 101, 105, and 144 each coordinate Ni(2+).

The protein belongs to the acireductone dioxygenase (ARD) family. The cofactor is Fe(2+). Ni(2+) serves as cofactor.

It is found in the cytoplasm. It localises to the nucleus. It catalyses the reaction 1,2-dihydroxy-5-(methylsulfanyl)pent-1-en-3-one + O2 = 4-methylsulfanyl-2-oxobutanoate + formate + 2 H(+). It carries out the reaction 1,2-dihydroxy-5-(methylsulfanyl)pent-1-en-3-one + O2 = 3-(methylsulfanyl)propanoate + CO + formate + 2 H(+). It participates in amino-acid biosynthesis; L-methionine biosynthesis via salvage pathway; L-methionine from S-methyl-5-thio-alpha-D-ribose 1-phosphate: step 5/6. Catalyzes 2 different reactions between oxygen and the acireductone 1,2-dihydroxy-3-keto-5-methylthiopentene (DHK-MTPene) depending upon the metal bound in the active site. Fe-containing acireductone dioxygenase (Fe-ARD) produces formate and 2-keto-4-methylthiobutyrate (KMTB), the alpha-ketoacid precursor of methionine in the methionine recycle pathway. Ni-containing acireductone dioxygenase (Ni-ARD) produces methylthiopropionate, carbon monoxide and formate, and does not lie on the methionine recycle pathway. The chain is Acireductone dioxygenase 2 (ARD2) from Arabidopsis thaliana (Mouse-ear cress).